A 291-amino-acid chain; its full sequence is ATP synthase gamma chain (291 aa).

The protein belongs to the ATPase gamma chain family. In terms of assembly, F-type ATPases have 2 components, CF(1) - the catalytic core - and CF(0) - the membrane proton channel. CF(1) has five subunits: alpha(3), beta(3), gamma(1), delta(1), epsilon(1). CF(0) has three main subunits: a, b and c.

It localises to the cell inner membrane. Its function is as follows. Produces ATP from ADP in the presence of a proton gradient across the membrane. The gamma chain is believed to be important in regulating ATPase activity and the flow of protons through the CF(0) complex. This chain is ATP synthase gamma chain, found in Burkholderia pseudomallei (strain 1106a).